The following is an 87-amino-acid chain: MAGTVAVPEGITNPPIDELLKVCDNKYALVIYAAKRARQINAYYAQLGEGLLEYVGPLVETYPTEKPLSIALREINAGLLTAEPIEQ.

This sequence belongs to the RNA polymerase subunit omega family. In terms of assembly, the RNAP catalytic core consists of 2 alpha, 1 beta, 1 beta' and 1 omega subunit. When a sigma factor is associated with the core the holoenzyme is formed, which can initiate transcription.

The catalysed reaction is RNA(n) + a ribonucleoside 5'-triphosphate = RNA(n+1) + diphosphate. Its function is as follows. Promotes RNA polymerase assembly. Latches the N- and C-terminal regions of the beta' subunit thereby facilitating its interaction with the beta and alpha subunits. This chain is DNA-directed RNA polymerase subunit omega, found in Acidothermus cellulolyticus (strain ATCC 43068 / DSM 8971 / 11B).